Here is a 132-residue protein sequence, read N- to C-terminus: uncharacterized protein (132 aa).

An N-terminal signal peptide occupies residues 1–24 (MVTIGSSSLVLFLFFVVFVQITYT). 2 helical membrane passes run 75 to 95 (YVNV…ILGI) and 112 to 132 (ESAI…VYIH).

The protein localises to the membrane. This is an uncharacterized protein from Saccharomyces cerevisiae (strain ATCC 204508 / S288c) (Baker's yeast).